The following is a 338-amino-acid chain: tRNA-cytidine(32) 2-sulfurtransferase (338 aa).

Positions Ser-86 to Ser-91 match the PP-loop motif motif. Positions 161, 164, and 252 each coordinate [4Fe-4S] cluster.

The protein belongs to the TtcA family. As to quaternary structure, homodimer. Requires Mg(2+) as cofactor. [4Fe-4S] cluster serves as cofactor.

It localises to the cytoplasm. The enzyme catalyses cytidine(32) in tRNA + S-sulfanyl-L-cysteinyl-[cysteine desulfurase] + AH2 + ATP = 2-thiocytidine(32) in tRNA + L-cysteinyl-[cysteine desulfurase] + A + AMP + diphosphate + H(+). Its pathway is tRNA modification. Catalyzes the ATP-dependent 2-thiolation of cytidine in position 32 of tRNA, to form 2-thiocytidine (s(2)C32). The sulfur atoms are provided by the cysteine/cysteine desulfurase (IscS) system. This is tRNA-cytidine(32) 2-sulfurtransferase from Albidiferax ferrireducens (strain ATCC BAA-621 / DSM 15236 / T118) (Rhodoferax ferrireducens).